Reading from the N-terminus, the 236-residue chain is MIRRYWNINFEEMMKAGVHFGHGTRKWNPRMAPYISAKRKGIHITNLTRTARFLSEACDLVFDAASRRKQFLIVGTKNKAADSVARAAIRARCHYVNKKWLGGILTNWSTTETRLQKFRDLRMEQKAGRLNRLPKGDAARLKRQLAHLQTYLGGIKYMTGLPDIVIIVDQQEEYTALRECMTLGIPTICLIDTNCDPDLADISIPTNDDAIASIRLILNKLVFAICEGRSSYIRNP.

It belongs to the universal ribosomal protein uS2 family.

Its subcellular location is the plastid. It is found in the chloroplast. The protein is Small ribosomal subunit protein uS2c (rps2) of Manihot esculenta (Cassava).